Reading from the N-terminus, the 477-residue chain is Cysteine--tRNA ligase (477 aa).

Cys-29 is a Zn(2+) binding site. A 'HIGH' region motif is present at residues 31 to 41 (PTVQASPHIGH). Cys-219, His-244, and Glu-248 together coordinate Zn(2+). The short motif at 275–279 (KMSKS) is the 'KMSKS' region element. Lys-278 lines the ATP pocket.

Belongs to the class-I aminoacyl-tRNA synthetase family. Monomer. Zn(2+) is required as a cofactor.

The protein localises to the cytoplasm. It catalyses the reaction tRNA(Cys) + L-cysteine + ATP = L-cysteinyl-tRNA(Cys) + AMP + diphosphate. The chain is Cysteine--tRNA ligase from Leifsonia xyli subsp. xyli (strain CTCB07).